The sequence spans 215 residues: Probable phosphoglycerate mutase GpmB (215 aa).

Substrate-binding positions include 8-15 (RHGETQWN), 21-22 (QG), Arg-58, Arg-60, 82-85 (ELNM), 104-105 (RR), and 151-152 (GI). The active-site Tele-phosphohistidine intermediate is His-9. The Proton donor/acceptor role is filled by Glu-82.

The protein belongs to the phosphoglycerate mutase family. GpmB subfamily.

It catalyses the reaction (2R)-2-phosphoglycerate = (2R)-3-phosphoglycerate. The protein operates within carbohydrate degradation; glycolysis; pyruvate from D-glyceraldehyde 3-phosphate: step 3/5. The polypeptide is Probable phosphoglycerate mutase GpmB (Shigella dysenteriae serotype 1 (strain Sd197)).